The following is a 43-amino-acid chain: Defensin (43 aa).

Cystine bridges form between cysteine 3-cysteine 34, cysteine 20-cysteine 39, and cysteine 24-cysteine 41.

It is found in the secreted. Antibacterial peptide. Affects Gram-negative bacteria including methicillin-resistant Staphylococcus aureus. The polypeptide is Defensin (Trypoxylus dichotomus (Japanese rhinoceros beetle)).